A 186-amino-acid polypeptide reads, in one-letter code: Inner membrane-spanning protein YciB (186 aa).

6 helical membrane passes run 3–23 (FLFD…AGIY), 24–44 (VATT…WFKH), 49–69 (AMQW…LIFH), 76–96 (WKPT…AVLL), 121–141 (LVWS…AYHF), and 149–169 (FKLF…SVWL).

Belongs to the YciB family.

Its subcellular location is the cell inner membrane. In terms of biological role, plays a role in cell envelope biogenesis, maintenance of cell envelope integrity and membrane homeostasis. The chain is Inner membrane-spanning protein YciB from Ralstonia nicotianae (strain ATCC BAA-1114 / GMI1000) (Ralstonia solanacearum).